The chain runs to 843 residues: Protein P (843 aa).

The interval 1-177 (MPLSYPHFRK…FCGSQYSWEQ (177 aa)) is terminal protein domain (TP). The segment at 178–346 (ELQHGSTSLN…YCLSHIINLL (169 aa)) is spacer. Disordered stretches follow at residues 228 to 255 (KQGQLANGKQGRSGRLRSRVHTPTRWPA) and 284 to 314 (EANPSLSTSKRHTSSGHAVELNSLPPSSVGS). A compositionally biased stretch (basic residues) spans 239–249 (RSGRLRSRVHT). The interval 347–690 (EDWGPCYEHG…YMNLYPVARQ (344 aa)) is polymerase/reverse transcriptase domain (RT). One can recognise a Reverse transcriptase domain in the interval 357–600 (EHHIRTPRTP…YNLHFMGYVI (244 aa)). Residues Asp-429, Asp-551, and Asp-552 each coordinate Mg(2+).

This sequence belongs to the hepadnaviridae P protein family.

It catalyses the reaction DNA(n) + a 2'-deoxyribonucleoside 5'-triphosphate = DNA(n+1) + diphosphate. It carries out the reaction Endonucleolytic cleavage to 5'-phosphomonoester.. With respect to regulation, activated by host HSP70 and HSP40 in vitro to be able to bind the epsilon loop of the pgRNA. Because deletion of the RNase H region renders the protein partly chaperone-independent, the chaperones may be needed indirectly to relieve occlusion of the RNA-binding site by this domain. Inhibited by several reverse-transcriptase inhibitors: Lamivudine, Adefovir and Entecavir. Its function is as follows. Multifunctional enzyme that converts the viral RNA genome into dsDNA in viral cytoplasmic capsids. This enzyme displays a DNA polymerase activity that can copy either DNA or RNA templates, and a ribonuclease H (RNase H) activity that cleaves the RNA strand of RNA-DNA heteroduplexes in a partially processive 3'- to 5'-endonucleasic mode. Neo-synthesized pregenomic RNA (pgRNA) are encapsidated together with the P protein, and reverse-transcribed inside the nucleocapsid. Initiation of reverse-transcription occurs first by binding the epsilon loop on the pgRNA genome, and is initiated by protein priming, thereby the 5'-end of (-)DNA is covalently linked to P protein. Partial (+)DNA is synthesized from the (-)DNA template and generates the relaxed circular DNA (RC-DNA) genome. After budding and infection, the RC-DNA migrates in the nucleus, and is converted into a plasmid-like covalently closed circular DNA (cccDNA). The activity of P protein does not seem to be necessary for cccDNA generation, and is presumably released from (+)DNA by host nuclear DNA repair machinery. This is Protein P from Hepatitis B virus genotype F2 subtype adw4q (isolate Senegal/9203) (HBV-F).